Reading from the N-terminus, the 205-residue chain is Arginine exporter protein ArgO (205 aa).

Transmembrane regions (helical) follow at residues 1–21 (MLAV…PLGP), 42–62 (LCAL…SALL), 67–87 (LLLA…GWGA), 111–131 (ILVT…DTFV), 147–167 (WFAL…ALLA), and 185–205 (LFVG…GFGL).

Belongs to the LysE/ArgO transporter (TC 2.A.75) family.

It is found in the cell inner membrane. The enzyme catalyses L-arginine(in) = L-arginine(out). Involved in the export of arginine. Important to control the intracellular level of arginine and the correct balance between arginine and lysine. This is Arginine exporter protein ArgO from Yersinia pseudotuberculosis serotype IB (strain PB1/+).